Here is a 507-residue protein sequence, read N- to C-terminus: Maturase K (507 aa).

This sequence belongs to the intron maturase 2 family. MatK subfamily.

The protein resides in the plastid. The protein localises to the chloroplast. Usually encoded in the trnK tRNA gene intron. Probably assists in splicing its own and other chloroplast group II introns. In Fagopyrum esculentum (Common buckwheat), this protein is Maturase K.